The chain runs to 343 residues: MEKFVDRVKIFVKGGKGGDGAVAFLREKYRPKGGPAGGDGGKGGDVILVATSSKHTLLDFKYKKHYIAQNGEPGKGKKMHGKDGEDLIIYVPVGTVVKDAQTGEVICDLVKEGQKCIVAKGGKGGRGNARFATPTNQAPTYAEKGQKGEERWIILELKLIADVGLVGFPNAGKSTLLSRLTRAKPKIADYPFTTLSPNLGVMELDWERRLVIADIPGLIEDAHKGAGLGHEFLRHIERTKFLAHVIDVSDFREREPVQAFEAINRELELYSPKLAQKPQIVVANKIDALSDRSLLSELEKYFKEKGYEFYAVSALTGEGIEELKEGLWKKYEEIRDKESAQVT.

The Obg domain maps to 2 to 160; sequence EKFVDRVKIF…RWIILELKLI (159 aa). Residues 161–332 form the OBG-type G domain; sequence ADVGLVGFPN…LKEGLWKKYE (172 aa). GTP is bound by residues 167 to 174, 192 to 196, 214 to 217, 284 to 287, and 313 to 315; these read GFPNAGKS, FTTLS, DIPG, NKID, and SAL. 2 residues coordinate Mg(2+): Ser-174 and Thr-194.

This sequence belongs to the TRAFAC class OBG-HflX-like GTPase superfamily. OBG GTPase family. In terms of assembly, monomer. Mg(2+) serves as cofactor.

Its subcellular location is the cytoplasm. An essential GTPase which binds GTP, GDP and possibly (p)ppGpp with moderate affinity, with high nucleotide exchange rates and a fairly low GTP hydrolysis rate. Plays a role in control of the cell cycle, stress response, ribosome biogenesis and in those bacteria that undergo differentiation, in morphogenesis control. This Aquifex aeolicus (strain VF5) protein is GTPase Obg.